Reading from the N-terminus, the 322-residue chain is Cysteine protease yopT1 (322 aa).

Residues Cys-139, His-258, and Asp-274 contribute to the active site.

The protein belongs to the peptidase C58 family. Interacts with human ARHA.

Its subcellular location is the secreted. In terms of biological role, cysteine protease, which is translocated into infected cells and plays a central role in pathogenesis by cleaving the C-terminus end of the human small GTPase RhoA/ARHA, a regulator of cytoskeleton. Once cleaved, ARHA loses its lipid modification, and is released from the cell membrane, leading to the subsequent disruption of actin cytoskeleton of the host cell. The sequence is that of Cysteine protease yopT1 (yopT1) from Yersinia enterocolitica.